Here is a 446-residue protein sequence, read N- to C-terminus: Probable arogenate/prephenate dehydrogenase (446 aa).

Positions 6–288 (LTISIIGGTD…SEAKRGAYYS (283 aa)) constitute a Prephenate/arogenate dehydrogenase domain.

It in the N-terminal section; belongs to the prephenate/arogenate dehydrogenase family.

This is Probable arogenate/prephenate dehydrogenase from Methanocaldococcus jannaschii (strain ATCC 43067 / DSM 2661 / JAL-1 / JCM 10045 / NBRC 100440) (Methanococcus jannaschii).